The primary structure comprises 301 residues: dTDP-4-dehydrorhamnose reductase (301 aa).

NADH is bound by residues 10–12 (GQV), aspartate 30, 39–40 (DF), and 63–65 (AHT). 11–12 (QV) contributes to the NADPH binding site. NADPH contacts are provided by residues 39–40 (DF), 63–65 (AHT), and tyrosine 102. 104–105 (TD) serves as a coordination point for dTDP-beta-L-rhamnose. Residues tyrosine 129 and lysine 133 each contribute to the NADH site. The NADPH site is built by tyrosine 129 and lysine 133. Residue tyrosine 129 is the Proton donor/acceptor of the active site. DTDP-beta-L-rhamnose is bound at residue tryptophan 155.

Belongs to the dTDP-4-dehydrorhamnose reductase family. As to quaternary structure, homodimer. Requires Mg(2+) as cofactor.

It catalyses the reaction dTDP-beta-L-rhamnose + NADP(+) = dTDP-4-dehydro-beta-L-rhamnose + NADPH + H(+). It participates in carbohydrate biosynthesis; dTDP-L-rhamnose biosynthesis. It functions in the pathway bacterial outer membrane biogenesis; LPS O-antigen biosynthesis. Functionally, involved in the biosynthesis of the dTDP-L-rhamnose which is an important component of lipopolysaccharide (LPS). Catalyzes the reduction of dTDP-6-deoxy-L-lyxo-4-hexulose to yield dTDP-L-rhamnose. RmlD uses NADH and NADPH nearly equally well. The polypeptide is dTDP-4-dehydrorhamnose reductase (Escherichia coli).